Consider the following 386-residue polypeptide: Terpene cyclase 6 (386 aa).

Positions 128, 276, and 280 each coordinate Mg(2+). Positions 128–132 (DDEID) match the D(D/E)XX(D/E) motif motif. The short motif at 276 to 284 (NEILSLQKE) is the NSE motif element. Residues 360–367 (WSYNCERY) carry the WxxxxxRY motif motif. Arg366 and Tyr367 together coordinate (2E,6E)-farnesyl diphosphate.

Belongs to the terpene synthase family. Homodimer. Mg(2+) is required as a cofactor.

The catalysed reaction is (2E,6E)-farnesyl diphosphate + H2O = trichobrasilenol + diphosphate. The enzyme catalyses (2E,6E)-farnesyl diphosphate = alpha-humulene + diphosphate. It carries out the reaction (2E,6E)-farnesyl diphosphate = (-)-(E)-beta-caryophyllene + diphosphate. It catalyses the reaction (2E,6E)-farnesyl diphosphate = (E)-2-epi-beta-caryophyllene + diphosphate. The catalysed reaction is (2E,6E)-farnesyl diphosphate + H2O = (+)-isoafricanol + diphosphate. The enzyme catalyses (2E,6E)-farnesyl diphosphate + H2O = (+)-(2S,3R,9R)-pristinol + diphosphate. It carries out the reaction (2E,6E)-farnesyl diphosphate = african-3-ene + diphosphate. It catalyses the reaction (2E,6E)-farnesyl diphosphate = african-1-ene + diphosphate. It participates in sesquiterpene biosynthesis. In terms of biological role, terpene cyclase that is able to convert FPP into a mixture of sesquiterpene hydrocarbons and alcohols. The main product is trichobrasilenol. Additionally, side products include alpha-humulene, caryophyllene, 2-epi-caryophyllene, african-3-ene, african-1-ene, isoafricanol and pristinol. Does not accept GPP, GGPP, and GFPP as substrates. The chain is Terpene cyclase 6 from Hypocrea atroviridis (Trichoderma atroviride).